The chain runs to 254 residues: MVIANSNIIFVAGLGGIGLDTSREIVKSGPKNLVLLDRIDNPAAIAELKALNPKVTITFYPYDVTVPVDETKKLLKTIFDKLKTVDLLINGAGILDDHQIERTIAVNFAGTVNTTTAILDFWDKRKGGPGGVVANICSVTGFNSIYQVPVYSASKAAALSFTMSIAKLAHITGVTAYSINPGITKTILVHKFNSWLNVEPRVAELLLEHPTQTTLQCAQNFVKAIEANQNGAIWKLDLGRLDAIEWTKHWDSGI.

10–33 (FVAGLGGIGLDTSREIVKSGPKNL) contacts NAD(+). Serine 138 is a substrate binding site. Tyrosine 151 (proton acceptor) is an active-site residue.

The protein belongs to the short-chain dehydrogenases/reductases (SDR) family. Homodimer.

It catalyses the reaction a primary alcohol + NAD(+) = an aldehyde + NADH + H(+). It carries out the reaction a secondary alcohol + NAD(+) = a ketone + NADH + H(+). In Drosophila picticornis (Fruit fly), this protein is Alcohol dehydrogenase (Adh).